The following is a 536-amino-acid chain: MLKIKRTWKTHSRILDKDPFSIEPPRKVIRALYDYTARKATEVSFAKGDFFHVIGRENDKAWYEVCNPAAGTRGFVPVSHFEEIGKTVKSERDSDGSGQISFTDLTTNSSTTRSSISELHSGSQPLFGIVQFDFAAERPDELEAKAGEAIIIIARSNHEWLVAKPIGRLGGPGLIPLSFIQLRDLKTGAVIKDVSEAVLRISCIPRVEDWKRAAADYKKSSIPLGKFSDGETQTMPSLSPSTENLQINNDVTYQAATDNSSTFPGSVANELTPLQTLESRTASIASKNKKDMSSEPTVVAAMVENYMIRDDQYWYLVRAVMSDGKHRNLCRYYEDFFNFQTKFLELFPNEAGRGDERRVIPYMPGPVDDVNELISSQRAMDLDVYLKEMCRLPARLLENELVKLFFLPLDGDVESPHPTSTMPEALPREPLSFSLPEKAPEKATNISIPESAPTTAGSTCKVKVRLGDETFALRVPSDISFEDFCERLTNKLGECEHLSYRDTNANKVLPLNNVDDLRKACSQESGVLLFAERRRF.

One can recognise an SH3 1 domain in the interval 24 to 86 (PPRKVIRALY…PVSHFEEIGK (63 aa)). The disordered stretch occupies residues 88-115 (VKSERDSDGSGQISFTDLTTNSSTTRSS). Low complexity predominate over residues 101–115 (SFTDLTTNSSTTRSS). In terms of domain architecture, SH3 2 spans 123-185 (SQPLFGIVQF…PLSFIQLRDL (63 aa)). The PX domain occupies 293 to 413 (SSEPTVVAAM…LFFLPLDGDV (121 aa)). The region spanning 459-533 (TCKVKVRLGD…ESGVLLFAER (75 aa)) is the PB1 domain.

Scd1, scd2, cdc42, and ras1, in its GTP-bound state, act cooperatively to form a protein complex.

Required for mating and morphogenesis. Interacts directly with scd1 and with cdc42. May bridge and facilitate scd1 and cdc42 interactions. The polypeptide is Protein scd2/ral3 (scd2) (Schizosaccharomyces pombe (strain 972 / ATCC 24843) (Fission yeast)).